A 98-amino-acid polypeptide reads, in one-letter code: Peptide YY (98 aa).

Residues 1-28 (MVAVRRPWPVTVAMLLILLACLGALVDA) form the signal peptide. A Phosphoserine modification is found at Ser-41. Tyr-64 is subject to Tyrosine amide. The propeptide occupies 68–98 (DVPAALFSKLLFTDDSDSENLPFRPEGLDQW).

Belongs to the NPY family. The peptide YY form is cleaved at Pro-30 by the prolyl endopeptidase FAP (seprase) activity (in vitro) to generate peptide YY(3-36).

It localises to the secreted. This gut peptide inhibits exocrine pancreatic secretion, has a vasoconstrictory action and inhibitis jejunal and colonic mobility. The polypeptide is Peptide YY (Pyy) (Mus musculus (Mouse)).